Here is a 137-residue protein sequence, read N- to C-terminus: Large ribosomal subunit protein uL16c (137 aa).

This sequence belongs to the universal ribosomal protein uL16 family. In terms of assembly, part of the 50S ribosomal subunit.

It localises to the plastid. The protein localises to the chloroplast. The polypeptide is Large ribosomal subunit protein uL16c (Hordeum vulgare (Barley)).